The primary structure comprises 492 residues: UPF0652 protein C22H10.08 (492 aa).

This sequence belongs to the UPF0652 family.

The protein localises to the cytoplasm. Its subcellular location is the nucleus. This Schizosaccharomyces pombe (strain 972 / ATCC 24843) (Fission yeast) protein is UPF0652 protein C22H10.08.